The chain runs to 280 residues: Gastrula zinc finger protein XlCGF46.1 (280 aa).

10 consecutive C2H2-type zinc fingers follow at residues 6–28 (FACK…KLMH), 34–56 (FECT…QLIH), 62–84 (FVCP…LLCH), 90–112 (FTCK…KLTH), 118–140 (FICS…QLIH), 146–168 (YVCT…LRTH), 174–196 (FKCE…KVTH), 202–224 (FTCE…QLTH), 230–252 (FKCE…QRFH), and 258–280 (YKCN…ELSH).

This sequence belongs to the krueppel C2H2-type zinc-finger protein family.

It localises to the nucleus. In terms of biological role, may be involved in transcriptional regulation. This Xenopus laevis (African clawed frog) protein is Gastrula zinc finger protein XlCGF46.1.